We begin with the raw amino-acid sequence, 229 residues long: Acetylcholine-binding protein (229 aa).

A signal peptide spans 1-19 (MRRNIFCLACLWIVQACLS). Asn85 is a glycosylation site (N-linked (GlcNAc...) asparagine). An Ig-like domain is found at 114–217 (PEVLTPQLAR…PEAYEDVEVS (104 aa)). A disulfide bridge connects residues Cys142 and Cys155.

Homopentamer. N-glycosylated. Expressed by glial cells.

The protein resides in the synaptic cleft. In terms of biological role, binds to acetylcholine. Modulates neuronal synaptic transmission. This Lymnaea stagnalis (Great pond snail) protein is Acetylcholine-binding protein.